Reading from the N-terminus, the 253-residue chain is Tetraspanin-11 (253 aa).

Helical transmembrane passes span 19–39, 63–83, 90–110, and 220–240; these read LLFIFNFFFWVGGAAVMAVGV, ILIFAGALVMVTGFLGFGAVI, LSAYFCLLLAIFLVELVAGVL, and LLLMGAVGIGVACLQICGMIL.

The protein belongs to the tetraspanin (TM4SF) family.

It is found in the membrane. The chain is Tetraspanin-11 (TSPAN11) from Bos taurus (Bovine).